We begin with the raw amino-acid sequence, 673 residues long: Putative potassium transport system protein Kup 1 (673 aa).

13 helical membrane passes run 14–34 (GAGF…SPLY), 58–78 (LSLI…WIAL), 101–121 (WLII…ALTP), 147–167 (LPIV…QRFG), 175–195 (FGPV…INLF), 196–216 (GDFS…LLSP), 220–240 (AGIF…ALYS), 252–272 (VSWP…AAWL), 294–314 (LIIF…QALI), 345–365 (LYIP…VVYF), 374–394 (AYGL…TVYL), 403–423 (VFVV…FAAS), and 427–447 (FLHG…VMAI).

Belongs to the HAK/KUP transporter (TC 2.A.72) family.

The protein localises to the cell membrane. It catalyses the reaction K(+)(in) + H(+)(in) = K(+)(out) + H(+)(out). Transport of potassium into the cell. Likely operates as a K(+):H(+) symporter. This Lactococcus lactis subsp. cremoris (strain MG1363) protein is Putative potassium transport system protein Kup 1.